The primary structure comprises 445 residues: Deoxyribodipyrimidine photo-lyase (445 aa).

Residues 20-148 enclose the Photolyase/cryptochrome alpha/beta domain; the sequence is SYVVYWMQAS…QVESNVIVPV (129 aa). Residue Arg-239 participates in DNA binding.

Belongs to the DNA photolyase class-2 family. It depends on FAD as a cofactor. Coenzyme F420-(gamma-Glu)n serves as cofactor.

It catalyses the reaction cyclobutadipyrimidine (in DNA) = 2 pyrimidine residues (in DNA).. In terms of biological role, involved in repair of UV radiation-induced DNA damage. Catalyzes the light-dependent monomerization (300-600 nm) of cyclobutyl pyrimidine dimers (in cis-syn configuration), which are formed between adjacent bases on the same DNA strand upon exposure to ultraviolet radiation. This Methanothermobacter thermautotrophicus (strain ATCC 29096 / DSM 1053 / JCM 10044 / NBRC 100330 / Delta H) (Methanobacterium thermoautotrophicum) protein is Deoxyribodipyrimidine photo-lyase (phr).